A 30-amino-acid polypeptide reads, in one-letter code: Superoxide dismutase [Cu-Zn] 1 (30 aa).

This sequence belongs to the Cu-Zn superoxide dismutase family. Cu cation serves as cofactor. The cofactor is Zn(2+). As to expression, expressed in fruits, leaves and pollen grains.

It localises to the cytoplasm. It is found in the endoplasmic reticulum. The enzyme catalyses 2 superoxide + 2 H(+) = H2O2 + O2. Its activity is regulated as follows. Inhibited by KCN and H(2)O(2). Destroys radicals which are normally produced within the cells and which are toxic to biological systems. Probably involved in the protection against oxidative stress during pollen development. The protein is Superoxide dismutase [Cu-Zn] 1 of Olea europaea (Common olive).